We begin with the raw amino-acid sequence, 48 residues long: Large ribosomal subunit protein bL33B (48 aa).

It belongs to the bacterial ribosomal protein bL33 family.

This Mycoplasma genitalium (strain ATCC 33530 / DSM 19775 / NCTC 10195 / G37) (Mycoplasmoides genitalium) protein is Large ribosomal subunit protein bL33B (rpmG2).